The primary structure comprises 604 residues: Glutamine--fructose-6-phosphate aminotransferase [isomerizing] (604 aa).

Cys-2 acts as the Nucleophile; for GATase activity in catalysis. Residues 2-219 form the Glutamine amidotransferase type-2 domain; it reads CGIMGAVSER…EGDSACVTTQ (218 aa). 2 SIS domains span residues 279-427 and 454-594; these read LRAS…DNRA and LASL…VDQP. Lys-599 acts as the For Fru-6P isomerization activity in catalysis.

Homodimer.

Its subcellular location is the cytoplasm. It carries out the reaction D-fructose 6-phosphate + L-glutamine = D-glucosamine 6-phosphate + L-glutamate. Catalyzes the first step in hexosamine metabolism, converting fructose-6P into glucosamine-6P using glutamine as a nitrogen source. The protein is Glutamine--fructose-6-phosphate aminotransferase [isomerizing] of Legionella pneumophila (strain Lens).